A 369-amino-acid polypeptide reads, in one-letter code: Variable large protein 7 (369 aa).

The signal sequence occupies residues 1 to 26; sequence MRKRISAIINKLNISIIIMTVVLMIG. The N-palmitoyl cysteine moiety is linked to residue Cys27. A lipid anchor (S-diacylglycerol cysteine) is attached at Cys27.

Belongs to the variable large protein (Vlp) family. Alpha subfamily.

It is found in the cell outer membrane. Its function is as follows. The Vlp and Vsp proteins are antigenically distinct proteins, only one vlp or vsp gene is transcriptionally active at any one time. Switching between these genes is a mechanism of host immune response evasion. In Borrelia hermsii, this protein is Variable large protein 7.